Here is a 194-residue protein sequence, read N- to C-terminus: Segregation and condensation protein B (194 aa).

It belongs to the ScpB family. In terms of assembly, homodimer. Homodimerization may be required to stabilize the binding of ScpA to the Smc head domains. Component of a cohesin-like complex composed of ScpA, ScpB and the Smc homodimer, in which ScpA and ScpB bind to the head domain of Smc. The presence of the three proteins is required for the association of the complex with DNA.

It localises to the cytoplasm. Functionally, participates in chromosomal partition during cell division. May act via the formation of a condensin-like complex containing Smc and ScpA that pull DNA away from mid-cell into both cell halves. The chain is Segregation and condensation protein B from Brevibacillus brevis (strain 47 / JCM 6285 / NBRC 100599).